The sequence spans 78 residues: ATP synthase subunit c (78 aa).

Helical transmembrane passes span 12–32 (IGAG…GHVV) and 54–74 (FIGI…ALLL).

This sequence belongs to the ATPase C chain family. In terms of assembly, F-type ATPases have 2 components, F(1) - the catalytic core - and F(0) - the membrane proton channel. F(1) has five subunits: alpha(3), beta(3), gamma(1), delta(1), epsilon(1). F(0) has four main subunits: a(1), b(1), b'(1) and c(10-14). The alpha and beta chains form an alternating ring which encloses part of the gamma chain. F(1) is attached to F(0) by a central stalk formed by the gamma and epsilon chains, while a peripheral stalk is formed by the delta, b and b' chains.

It is found in the cellular chromatophore membrane. Functionally, f(1)F(0) ATP synthase produces ATP from ADP in the presence of a proton or sodium gradient. F-type ATPases consist of two structural domains, F(1) containing the extramembraneous catalytic core and F(0) containing the membrane proton channel, linked together by a central stalk and a peripheral stalk. During catalysis, ATP synthesis in the catalytic domain of F(1) is coupled via a rotary mechanism of the central stalk subunits to proton translocation. Key component of the F(0) channel; it plays a direct role in translocation across the membrane. A homomeric c-ring of between 10-14 subunits forms the central stalk rotor element with the F(1) delta and epsilon subunits. In Rhodobacter capsulatus (Rhodopseudomonas capsulata), this protein is ATP synthase subunit c.